Here is a 215-residue protein sequence, read N- to C-terminus: N-(5'-phosphoribosyl)anthranilate isomerase (215 aa).

The protein belongs to the TrpF family.

It catalyses the reaction N-(5-phospho-beta-D-ribosyl)anthranilate = 1-(2-carboxyphenylamino)-1-deoxy-D-ribulose 5-phosphate. Its pathway is amino-acid biosynthesis; L-tryptophan biosynthesis; L-tryptophan from chorismate: step 3/5. This chain is N-(5'-phosphoribosyl)anthranilate isomerase, found in Rippkaea orientalis (strain PCC 8801 / RF-1) (Cyanothece sp. (strain PCC 8801)).